A 223-amino-acid polypeptide reads, in one-letter code: Ribose-5-phosphate isomerase A (223 aa).

Substrate is bound by residues 32–35 (TGST), 85–88 (DGAD), and 98–101 (KGGG). The active-site Proton acceptor is Glu-107. Residue Lys-125 coordinates substrate.

The protein belongs to the ribose 5-phosphate isomerase family. In terms of assembly, homodimer.

The catalysed reaction is aldehydo-D-ribose 5-phosphate = D-ribulose 5-phosphate. It participates in carbohydrate degradation; pentose phosphate pathway; D-ribose 5-phosphate from D-ribulose 5-phosphate (non-oxidative stage): step 1/1. Its function is as follows. Catalyzes the reversible conversion of ribose-5-phosphate to ribulose 5-phosphate. The sequence is that of Ribose-5-phosphate isomerase A from Pseudomonas syringae pv. tomato (strain ATCC BAA-871 / DC3000).